A 144-amino-acid polypeptide reads, in one-letter code: Cytochrome c oxidase subunit 4 isoform 1, mitochondrial (144 aa).

The Mitochondrial matrix segment spans residues 1 to 73 (SVVKSEDFSL…SFAEMNRGSN (73 aa)). Lysine 4 is modified (N6-acetyllysine; alternate). At lysine 4 the chain carries N6-succinyllysine; alternate. Lysine 28 carries the post-translational modification N6-acetyllysine. A phosphoserine mark is found at serine 31 and serine 33. Lysine 35 is modified (N6-acetyllysine; alternate). The residue at position 35 (lysine 35) is an N6-succinyllysine; alternate. Lysine 42 is modified (N6-acetyllysine). The chain crosses the membrane as a helical span at residues 74–99 (EWKTVVGGAMFFIGFTALIIMWQKHY). Residues 100–144 (VYGPLPQTFDKEWVGKQTKRMLDMKVNPIQGLASKWDYEKNEWKK) are Mitochondrial intermembrane-facing.

This sequence belongs to the cytochrome c oxidase IV family. In terms of assembly, component of the cytochrome c oxidase (complex IV, CIV), a multisubunit enzyme composed of 14 subunits. The complex is composed of a catalytic core of 3 subunits MT-CO1, MT-CO2 and MT-CO3, encoded in the mitochondrial DNA, and 11 supernumerary subunits COX4I, COX5A, COX5B, COX6A, COX6B, COX6C, COX7A, COX7B, COX7C, COX8 and NDUFA4, which are encoded in the nuclear genome. The complex exists as a monomer or a dimer and forms supercomplexes (SCs) in the inner mitochondrial membrane with NADH-ubiquinone oxidoreductase (complex I, CI) and ubiquinol-cytochrome c oxidoreductase (cytochrome b-c1 complex, complex III, CIII), resulting in different assemblies (supercomplex SCI(1)III(2)IV(1) and megacomplex MCI(2)III(2)IV(2)). Interacts with PHB2; the interaction decreases in absence of SPHK2. Interacts with AFG1L. Interacts with ABCB7; this interaction allows the regulation of cellular iron homeostasis and cellular reactive oxygen species (ROS) levels in cardiomyocytes. Interacts with FLVCR2; this interaction occurs in the absence of heme and is disrupted upon heme binding. Interacts with IRGC.

It is found in the mitochondrion inner membrane. Its pathway is energy metabolism; oxidative phosphorylation. In terms of biological role, component of the cytochrome c oxidase, the last enzyme in the mitochondrial electron transport chain which drives oxidative phosphorylation. The respiratory chain contains 3 multisubunit complexes succinate dehydrogenase (complex II, CII), ubiquinol-cytochrome c oxidoreductase (cytochrome b-c1 complex, complex III, CIII) and cytochrome c oxidase (complex IV, CIV), that cooperate to transfer electrons derived from NADH and succinate to molecular oxygen, creating an electrochemical gradient over the inner membrane that drives transmembrane transport and the ATP synthase. Cytochrome c oxidase is the component of the respiratory chain that catalyzes the reduction of oxygen to water. Electrons originating from reduced cytochrome c in the intermembrane space (IMS) are transferred via the dinuclear copper A center (CU(A)) of subunit 2 and heme A of subunit 1 to the active site in subunit 1, a binuclear center (BNC) formed by heme A3 and copper B (CU(B)). The BNC reduces molecular oxygen to 2 water molecules using 4 electrons from cytochrome c in the IMS and 4 protons from the mitochondrial matrix. This is Cytochrome c oxidase subunit 4 isoform 1, mitochondrial (COX4I1) from Hylobates agilis (Agile gibbon).